Here is a 200-residue protein sequence, read N- to C-terminus: Probable DNA-directed RNA polymerase subunit delta (200 aa).

The 70-residue stretch at 19-88 (LSMIEVARAI…GDNKWGLRSW (70 aa)) folds into the HTH HARE-type domain. Composition is skewed to acidic residues over residues 125–143 (DSDAIDYNADDPEDEDAYE) and 150–200 (YDDE…TSEE). The tract at residues 125-200 (DSDAIDYNAD…SDDDAETSEE (76 aa)) is disordered.

The protein belongs to the RpoE family. RNAP is composed of a core of 2 alpha, a beta and a beta' subunits. The core is associated with a delta subunit and one of several sigma factors.

In terms of biological role, participates in both the initiation and recycling phases of transcription. In the presence of the delta subunit, RNAP displays an increased specificity of transcription, a decreased affinity for nucleic acids, and an increased efficiency of RNA synthesis because of enhanced recycling. The chain is Probable DNA-directed RNA polymerase subunit delta from Streptococcus pneumoniae serotype 4 (strain ATCC BAA-334 / TIGR4).